The following is a 164-amino-acid chain: ATP synthase subunit b 1 (164 aa).

A helical membrane pass occupies residues 8-28 (PETWVAVAFVILMGVFAYFGV).

Belongs to the ATPase B chain family. In terms of assembly, F-type ATPases have 2 components, F(1) - the catalytic core - and F(0) - the membrane proton channel. F(1) has five subunits: alpha(3), beta(3), gamma(1), delta(1), epsilon(1). F(0) has three main subunits: a(1), b(2) and c(10-14). The alpha and beta chains form an alternating ring which encloses part of the gamma chain. F(1) is attached to F(0) by a central stalk formed by the gamma and epsilon chains, while a peripheral stalk is formed by the delta and b chains.

Its subcellular location is the cell inner membrane. Its function is as follows. F(1)F(0) ATP synthase produces ATP from ADP in the presence of a proton or sodium gradient. F-type ATPases consist of two structural domains, F(1) containing the extramembraneous catalytic core and F(0) containing the membrane proton channel, linked together by a central stalk and a peripheral stalk. During catalysis, ATP synthesis in the catalytic domain of F(1) is coupled via a rotary mechanism of the central stalk subunits to proton translocation. Functionally, component of the F(0) channel, it forms part of the peripheral stalk, linking F(1) to F(0). This chain is ATP synthase subunit b 1, found in Rhodopseudomonas palustris (strain BisB18).